A 252-amino-acid polypeptide reads, in one-letter code: Protein PF0476 (252 aa).

The protein belongs to the CinA family.

This Pyrococcus furiosus (strain ATCC 43587 / DSM 3638 / JCM 8422 / Vc1) protein is Protein PF0476.